Reading from the N-terminus, the 399-residue chain is Tryptophan synthase beta chain (399 aa).

K92 is subject to N6-(pyridoxal phosphate)lysine.

Belongs to the TrpB family. Tetramer of two alpha and two beta chains. Pyridoxal 5'-phosphate serves as cofactor.

The catalysed reaction is (1S,2R)-1-C-(indol-3-yl)glycerol 3-phosphate + L-serine = D-glyceraldehyde 3-phosphate + L-tryptophan + H2O. Its pathway is amino-acid biosynthesis; L-tryptophan biosynthesis; L-tryptophan from chorismate: step 5/5. The beta subunit is responsible for the synthesis of L-tryptophan from indole and L-serine. The polypeptide is Tryptophan synthase beta chain (Bordetella petrii (strain ATCC BAA-461 / DSM 12804 / CCUG 43448)).